A 281-amino-acid polypeptide reads, in one-letter code: Para-Rep C1 (281 aa).

The region spanning 3-97 (TLQGTFWCFT…VAGPWTYGEL (95 aa)) is the CRESS-DNA virus Rep endonuclease domain. Positions 10–13 (CFTL) match the RCR-1 motif. Residues glutamate 36 and histidine 42 each coordinate a divalent metal cation. An RCR-2 motif is present at residues 42–44 (HLQ). The Nuclear localization signal motif lies at 51–71 (KRSTLKMMKELLPGAHLEVSK). The For DNA cleavage activity role is filled by tyrosine 80. Positions 80–83 (YAMK) match the RCR-3 motif. Glutamate 85 contributes to the a divalent metal cation binding site. The Nuclear localization signal signature appears at 97 to 103 (LLKKGSN). 173-181 (GPQGGEGKT) is an ATP binding site.

The protein belongs to the nanoviridea/circoviridae replication-associated protein family. In terms of assembly, homooligomer (Potential). Rep binds to repeated DNA motifs (iterons). Mg(2+) is required as a cofactor. Mn(2+) serves as cofactor.

The protein resides in the host nucleus. It carries out the reaction ATP + H2O = ADP + phosphate + H(+). In terms of biological role, initiates and terminates the replication only of its own subviral DNA molecule. The closed circular ssDNA genome is first converted to a superhelical dsDNA. Rep binds a specific hairpin at the genome origin of replication. Introduces an endonucleolytic nick within the intergenic region of the genome, thereby initiating the rolling circle replication (RCR). Following cleavage, binds covalently to the 5'-phosphate of DNA as a tyrosyl ester. The cleavage gives rise to a free 3'-OH that serves as a primer for the cellular DNA polymerase. The polymerase synthesizes the (+) strand DNA by rolling circle mechanism. After one round of replication, a Rep-catalyzed nucleotidyl transfer reaction releases a circular single-stranded virus genome, thereby terminating the replication. Displays origin-specific DNA cleavage, nucleotidyl transferase, ATPase and helicase activities. The chain is Para-Rep C1 (C1) from Milk vetch dwarf C1 alphasatellite (MVDC1A).